The sequence spans 486 residues: Membrane-bound lytic murein transglycosylase F (486 aa).

The first 21 residues, 1 to 21 (MKRLKINYILIGVVTLLLALA), serve as a signal peptide directing secretion. The tract at residues 22 to 268 (LWPNITWRGG…RLEEKYLGHV (247 aa)) is non-LT domain. The tract at residues 269–486 (GSFDYVDTKT…AVTPELALNF (218 aa)) is LT domain. Residue glutamate 313 is part of the active site.

In the N-terminal section; belongs to the bacterial solute-binding protein 3 family. The protein in the C-terminal section; belongs to the transglycosylase Slt family.

The protein localises to the cell outer membrane. The catalysed reaction is Exolytic cleavage of the (1-&gt;4)-beta-glycosidic linkage between N-acetylmuramic acid (MurNAc) and N-acetylglucosamine (GlcNAc) residues in peptidoglycan, from either the reducing or the non-reducing ends of the peptidoglycan chains, with concomitant formation of a 1,6-anhydrobond in the MurNAc residue.. Its function is as follows. Murein-degrading enzyme that degrades murein glycan strands and insoluble, high-molecular weight murein sacculi, with the concomitant formation of a 1,6-anhydromuramoyl product. Lytic transglycosylases (LTs) play an integral role in the metabolism of the peptidoglycan (PG) sacculus. Their lytic action creates space within the PG sacculus to allow for its expansion as well as for the insertion of various structures such as secretion systems and flagella. The chain is Membrane-bound lytic murein transglycosylase F from Serratia proteamaculans (strain 568).